A 325-amino-acid chain; its full sequence is Elongation factor P--(R)-beta-lysine ligase (325 aa).

76–78 serves as a coordination point for substrate; it reads SPE. ATP contacts are provided by residues 100–102 and asparagine 109; that span reads RNE. Tyrosine 118 contributes to the substrate binding site. 244–245 lines the ATP pocket; the sequence is EL. Residue glutamate 251 coordinates substrate. ATP is bound at residue glycine 300.

It belongs to the class-II aminoacyl-tRNA synthetase family. EpmA subfamily. As to quaternary structure, homodimer.

The enzyme catalyses D-beta-lysine + L-lysyl-[protein] + ATP = N(6)-((3R)-3,6-diaminohexanoyl)-L-lysyl-[protein] + AMP + diphosphate + H(+). With EpmB is involved in the beta-lysylation step of the post-translational modification of translation elongation factor P (EF-P) on 'Lys-34'. Catalyzes the ATP-dependent activation of (R)-beta-lysine produced by EpmB, forming a lysyl-adenylate, from which the beta-lysyl moiety is then transferred to the epsilon-amino group of EF-P 'Lys-34'. In Escherichia fergusonii (strain ATCC 35469 / DSM 13698 / CCUG 18766 / IAM 14443 / JCM 21226 / LMG 7866 / NBRC 102419 / NCTC 12128 / CDC 0568-73), this protein is Elongation factor P--(R)-beta-lysine ligase.